Consider the following 269-residue polypeptide: Myelin protein zero-like protein 1 (269 aa).

An N-terminal signal peptide occupies residues Met1–Val35. Residues Ser36–Gln146 enclose the Ig-like V-type domain. Over Ser36–Ala162 the chain is Extracellular. Residues Asn50, Asn64, and Asn130 are each glycosylated (N-linked (GlcNAc...) asparagine). An intrachain disulfide couples Cys58 to Cys135. Residues Phe163–Ile183 form a helical membrane-spanning segment. Residues Thr184 to Asn269 lie on the Cytoplasmic side of the membrane. Residues Gly202–Pro238 form a disordered region. Residues Cys203–Lys213 show a composition bias toward polar residues. Residues Ser206, Ser210, Ser219, and Ser221 each carry the phosphoserine modification. An ITIM motif 1 motif is present at residues Val239 to Leu244. Tyr241 carries the phosphotyrosine modification. Ser260 carries the phosphoserine modification. Positions Val261–Ile266 match the ITIM motif 2 motif. Phosphotyrosine is present on Tyr263.

Belongs to the myelin P0 protein family. Interacts with phosphorylated PTPN11/SHP-2. Phosphorylated on tyrosine residues upon stimulation with pervanadate and concanavalin-A (ConA). Phosphorylation at Tyr-241 and Tyr-263 is required for interaction with PTPN11/SHP-2. Dephosphorylated by PTPN11/SHP-2 (in vitro). In terms of processing, N-glycosylated.

It localises to the membrane. Cell surface receptor, which is involved in signal transduction processes. Recruits PTPN11/SHP-2 to the cell membrane and is a putative substrate of PTPN11/SHP-2. Is a major receptor for concanavalin-A (ConA) and is involved in cellular signaling induced by ConA, which probably includes Src family tyrosine-protein kinases. May be involved in regulation of integrin-mediated cell motility. This Bos taurus (Bovine) protein is Myelin protein zero-like protein 1 (MPZL1).